Reading from the N-terminus, the 476-residue chain is Carbamoyl phosphate synthase arginine-specific small chain (476 aa).

Residues 1-24 constitute a mitochondrion transit peptide; that stretch reads MFSHLLKPAARSAGLLGHVNRRYL. The Glutamine amidotransferase type-1 domain maps to 228–415; sequence HVALIDCGVK…IQNVQRYKDH (188 aa). The active-site Nucleophile is the Cys-304. Catalysis depends on residues His-388 and Glu-390.

It belongs to the CarA family. In terms of assembly, heterodimer composed of 2 chains; the small (or glutamine) chain promotes the hydrolysis of glutamine to ammonia, which is used by the large (or ammonia) chain to synthesize carbamoyl phosphate.

It is found in the mitochondrion matrix. It carries out the reaction hydrogencarbonate + L-glutamine + 2 ATP + H2O = carbamoyl phosphate + L-glutamate + 2 ADP + phosphate + 2 H(+). The enzyme catalyses L-glutamine + H2O = L-glutamate + NH4(+). The protein operates within amino-acid biosynthesis; L-arginine biosynthesis; carbamoyl phosphate from bicarbonate: step 1/1. Its function is as follows. Small subunit of the arginine-specific carbamoyl phosphate synthase (CPSase). CPSase catalyzes the formation of carbamoyl phosphate from the ammonia moiety of glutamine, carbonate, and phosphate donated by ATP, the first step of the arginine biosynthetic pathway. The small subunit (glutamine amidotransferase) binds and cleaves glutamine to supply the large subunit with the substrate ammonia. This is Carbamoyl phosphate synthase arginine-specific small chain (CPA1) from Phaeosphaeria nodorum (strain SN15 / ATCC MYA-4574 / FGSC 10173) (Glume blotch fungus).